Consider the following 101-residue polypeptide: Protein S100-A3 (101 aa).

2 consecutive EF-hand domains span residues 12 to 47 (IVCT…TWTP) and 50 to 85 (FREC…LCLY). Ca(2+) is bound at residue Lys-26. A disulfide bridge connects residues Cys-30 and Cys-68. Arg-51 is modified (citrulline; by PAD3). Residues Asp-63, Asn-65, Asp-67, Glu-69, and Glu-74 each contribute to the Ca(2+) site. Zn(2+)-binding residues include Cys-83, Cys-86, His-87, and Cys-93.

It belongs to the S-100 family. Homodimer and homotetramer for the citrullinated form. Post-translationally, more than half of the arginine residues undergo citrullination by PAD1 and PAD2. Arg-51 is specifically citrullinated by PAD3 and promotes tetramerization. In terms of tissue distribution, skin specific, specifically expressed in cuticle of pelage follicle.

The protein resides in the cytoplasm. In terms of biological role, binds both calcium and zinc. May be involved in calcium-dependent cuticle cell differentiation, hair shaft and hair cuticular barrier formation. This Mus musculus (Mouse) protein is Protein S100-A3 (S100a3).